A 609-amino-acid chain; its full sequence is Probable ubiquitin-conjugating enzyme E2 25 (609 aa).

2 disordered regions span residues 70–99 (EEDE…LDPE) and 151–185 (ADKE…SQFS). Residues 156–178 (ASSSKSSHANNGNNSSKKATKAS) show a composition bias toward low complexity. The UBC core domain maps to 332 to 492 (DWAKRIQDEW…TFILSLKTMV (161 aa)). Cysteine 418 functions as the Glycyl thioester intermediate in the catalytic mechanism.

This sequence belongs to the ubiquitin-conjugating enzyme family. In terms of tissue distribution, expressed in seeds, pistils, siliques, hypocotyls and leaves.

The enzyme catalyses S-ubiquitinyl-[E1 ubiquitin-activating enzyme]-L-cysteine + [E2 ubiquitin-conjugating enzyme]-L-cysteine = [E1 ubiquitin-activating enzyme]-L-cysteine + S-ubiquitinyl-[E2 ubiquitin-conjugating enzyme]-L-cysteine.. The protein operates within protein modification; protein ubiquitination. Its function is as follows. Accepts the ubiquitin from the E1 complex and catalyzes its covalent attachment to other proteins. This chain is Probable ubiquitin-conjugating enzyme E2 25 (UBC25), found in Arabidopsis thaliana (Mouse-ear cress).